The sequence spans 231 residues: Transmembrane gamma-carboxyglutamic acid protein 3 (231 aa).

Residues methionine 1–arginine 19 constitute a propeptide that is removed on maturation. The 46-residue stretch at alanine 20–asparagine 65 folds into the Gla domain. The Extracellular portion of the chain corresponds to alanine 20–aspartate 78. 4-carboxyglutamate occurs at positions 22, 25, 26, 33, 35, 38, 39, 44, 45, 48, 51, 54, and 58. Cysteines 36 and 41 form a disulfide. Residues alanine 79 to tryptophan 101 form a helical membrane-spanning segment. Topologically, residues arginine 102–lysine 231 are cytoplasmic. 2 disordered regions span residues histidine 140–glycine 165 and leucine 182–lysine 231. Residues glutamate 202–serine 213 show a composition bias toward low complexity.

Gla residues are produced after subsequent post-translational modifications of glutamate by a vitamin K-dependent gamma-carboxylase. Expressed in brain, lung, kidney and heart.

It localises to the membrane. In Homo sapiens (Human), this protein is Transmembrane gamma-carboxyglutamic acid protein 3 (PRRG3).